The primary structure comprises 444 residues: MHILVVSVNYRTAPVEFREKLTFQATELEQAMTTLQKQKSVLENVIVSTCNRTEIYAVVDQLHTGRYYIKKFLADWFQLEIEEVAPYLTIFEQDGAIDHLFRVTCGLDSMVVGETQILGQIKDSFLEAQQVKATGTIFNELFKQVITLAKRAHSETTIGESAMSVSYAAVELGKKIFGELTDCHVLILGAGKMGELALQNLYGSGARKVTVMNRTLSKAEIMAEKYMGHAKPLSELQCALLEADILISSTGASDYVITKEMMTKVEKMRSGRPLFMVDIAVPRDIDPAIDELEGSFLYDIDDLQGVVEANRAERLKEAEKIQFMIEEEIVLFKTWLSTLGVVPLISALRDKALAIQSETMESLERKIPTLSDRERKVISKHTKSIINQLLKDPILVAKEIAAEEGADEKLALFAKIFDLEMEDVESRAEEVEHKRAWTPSVPSL.

Residues 49-52 (TCNR), Ser109, 114-116 (ETQ), and Gln120 contribute to the substrate site. The Nucleophile role is filled by Cys50. Residue 189-194 (GAGKMG) coordinates NADP(+).

Belongs to the glutamyl-tRNA reductase family. In terms of assembly, homodimer.

It catalyses the reaction (S)-4-amino-5-oxopentanoate + tRNA(Glu) + NADP(+) = L-glutamyl-tRNA(Glu) + NADPH + H(+). It functions in the pathway porphyrin-containing compound metabolism; protoporphyrin-IX biosynthesis; 5-aminolevulinate from L-glutamyl-tRNA(Glu): step 1/2. Functionally, catalyzes the NADPH-dependent reduction of glutamyl-tRNA(Glu) to glutamate 1-semialdehyde (GSA). The protein is Glutamyl-tRNA reductase of Bacillus cereus (strain ATCC 10987 / NRS 248).